The following is a 599-amino-acid chain: uncharacterized protein (599 aa).

An ATP-binding site is contributed by 49–56 (GPPGSGKT). Residues 416–599 (AEVRKELEYK…TKIFEEKFSV (184 aa)) enclose the Macro domain.

In the N-terminal section; belongs to the AAA ATPase family. RarA/MGS1/WRNIP1 subfamily.

This is an uncharacterized protein from Thermotoga maritima (strain ATCC 43589 / DSM 3109 / JCM 10099 / NBRC 100826 / MSB8).